We begin with the raw amino-acid sequence, 289 residues long: 4-diphosphocytidyl-2-C-methyl-D-erythritol kinase (289 aa).

The active site involves K11. 95–105 (PMGGGIGGGSS) serves as a coordination point for ATP. D137 is an active-site residue.

The protein belongs to the GHMP kinase family. IspE subfamily.

It catalyses the reaction 4-CDP-2-C-methyl-D-erythritol + ATP = 4-CDP-2-C-methyl-D-erythritol 2-phosphate + ADP + H(+). Its pathway is isoprenoid biosynthesis; isopentenyl diphosphate biosynthesis via DXP pathway; isopentenyl diphosphate from 1-deoxy-D-xylulose 5-phosphate: step 3/6. Functionally, catalyzes the phosphorylation of the position 2 hydroxy group of 4-diphosphocytidyl-2C-methyl-D-erythritol. The polypeptide is 4-diphosphocytidyl-2-C-methyl-D-erythritol kinase (Aeromonas salmonicida (strain A449)).